The primary structure comprises 292 residues: MFTGSIVALVTPMDEKGAIDRVSLKKLIDYHVASGTAAIVAVGTTGETSTLSHEEHGDVVMWTLELSDGRVPVIAGTGANSTSEAVSLTRRFNDSGVVGCLSVTPYYNRPSQEGLFQHFRAIAERSDLPQILYNVPARTGCDMLPPTVARLAEIKNIIGIKEATGNLSRVSQIQELVNDDFLLLSGDDASALDFIQLGGKGVISVTANVAAKEMAQLCALAADGNYADARRLNQRLMPLHQKLFFEPSPIPVKWACKALGLMATDTLRLPMTPLTRAGSRVVRQALTDAGLL.

Residue Thr-45 coordinates pyruvate. The active-site Proton donor/acceptor is the Tyr-133. The active-site Schiff-base intermediate with substrate is the Lys-161. Ile-203 provides a ligand contact to pyruvate.

The protein belongs to the DapA family. As to quaternary structure, homotetramer; dimer of dimers.

Its subcellular location is the cytoplasm. The enzyme catalyses L-aspartate 4-semialdehyde + pyruvate = (2S,4S)-4-hydroxy-2,3,4,5-tetrahydrodipicolinate + H2O + H(+). It participates in amino-acid biosynthesis; L-lysine biosynthesis via DAP pathway; (S)-tetrahydrodipicolinate from L-aspartate: step 3/4. In terms of biological role, catalyzes the condensation of (S)-aspartate-beta-semialdehyde [(S)-ASA] and pyruvate to 4-hydroxy-tetrahydrodipicolinate (HTPA). This Sodalis glossinidius (strain morsitans) protein is 4-hydroxy-tetrahydrodipicolinate synthase.